The following is a 278-amino-acid chain: E3 ubiquitin-protein ligase MARCHF5 (278 aa).

Residues 6–75 form an RING-CH-type zinc finger; that stretch reads LQQMLDRSCW…PQCNAEYLIV (70 aa). Positions 14, 17, 33, 35, 43, 46, 65, and 68 each coordinate Zn(2+). 4 helical membrane passes run 99–119, 139–159, 209–229, and 238–258; these read FAAAGIMVGSIYWTAVTYGAV, PLFLLIGLPTIPVMLILGKMI, ILCGALVFPTIATIVGKLMFS, and TILGGIAFVAIKGAFKVYFKQ.

As to quaternary structure, monomer and homodimer. Interacts with MFN1, MFN2, DNM1L and FIS1. Post-translationally, autoubiquitinated leading to degradation (short half-life).

The protein resides in the mitochondrion outer membrane. The catalysed reaction is S-ubiquitinyl-[E2 ubiquitin-conjugating enzyme]-L-cysteine + [acceptor protein]-L-lysine = [E2 ubiquitin-conjugating enzyme]-L-cysteine + N(6)-ubiquitinyl-[acceptor protein]-L-lysine.. Its pathway is protein modification; protein ubiquitination. Functionally, mitochondrial E3 ubiquitin-protein ligase that plays a crucial role in the control of mitochondrial morphology by acting as a positive regulator of mitochondrial fission and as an important regulator of immune response. Plays a crucial role in maintaining mitochondrial homeostasis by regulating the dynamics of mitochondria through the ubiquitination of key proteins involved in fission and fusion such as FIS1, DNM1L and MFN1. Acts as a critical determinant of mitotic apoptosis through both MCL1-dependent and -independent pathways. Turns off persistent immune signaling by degrading oligomeric complexes of retinoic acid-inducible gene I/DDX58 and mitochondrial antiviral-signaling protein/MAVS formed upon RNA virus infection. Promotes STING-mediated type-I interferon production via 'Lys-63'-linked ubiquitination of STING1 thereby preserving its activity and preventing the formation of inactive STING1 polymers. Plays also an essential role in the formation of PEX3-containing vesicles in the de novo biogenesis of peroxisomes from mitochondria. Acts as a regulator of NLRP3 inflammasome activation on the mitochondria by mediating the 'Lys-27'-linked polyubiquitination of NLRP3, positively regulating the NLRP3-NEK7 complex formation and NLRP3 oligomerization. In Bos taurus (Bovine), this protein is E3 ubiquitin-protein ligase MARCHF5 (MARCHF5).